We begin with the raw amino-acid sequence, 465 residues long: FAD-dependent monooxygenase olcE (465 aa).

The helical transmembrane segment at 9 to 29 threads the bilayer; sequence IIIGGSVAGLTLALSLNKIGI. Residues E35, G49, R108, D308, and A321 each contribute to the FAD site.

It belongs to the paxM FAD-dependent monooxygenase family. Requires FAD as cofactor.

Its subcellular location is the membrane. It participates in secondary metabolite biosynthesis; terpenoid biosynthesis. Its function is as follows. FAD-dependent monooxygenase; part of the gene cluster that mediates the biosynthesis of 15-deoxyoxalicine B. The first step of the pathway is the synthesis of nicotinyl-CoA from nicotinic acid by the nicotinic acid-CoA ligase olcI. Nicotinyl-CoA is then a substrate of polyketide synthase olcA to produce 4-hydroxy-6-(3-pyridinyl)-2H-pyran-2-one (HPPO) which is further prenylated by the polyprenyl transferase olcH to yield geranylgeranyl-HPPO. Geranylgeranyl pyrophosphate is provided by the cluster-specific geranylgeranyl pyrophosphate synthase olcC. The FAD-dependent monooxygenase olcE catalyzes the epoxidation of geranylgeranyl-HPPO and the terpene cyclase olcD catalyzes the cyclization of the terpenoid component, resulting in the formation of the tricyclic terpene moiety seen in predecaturin E. The cytochrome P450 monooxygenase then catalyzes the allylic oxidation of predecaturin E, which is followed by spirocylization with concomitant loss of one molecule of water to form decaturin E. Decaturin E is the substrate of the cytochrome P450 monooxygenase olcJ which hydroxylates it at the C-29 position to form decaturin F. The short-chain dehydrogenase/reductase olcF may catalyze the oxidation of decaturin F to generate the 29-hydroxyl-27-one intermediate, and subsequent hemiacetal formation probably leads to the formation of decaturin C. The dioxygenase olcK may be a peroxisomal enzyme that catalyzes the hydroxylation of decaturin C into decaturin A once decaturin C is shuttled into the peroxisome by the MFS transporter olcL. Finally the cytochrome P450 monooxygenase olcB catalyzes the oxidative rearrangement to yield 15-deoxyoxalicine B. In the absence of olcJ, decaturin E may be shunted to a pathway in which it is oxidized to a ketone, possibly by olcF, to form decaturin D, which undergoes further allylic oxidation to yield decaturin G. Moreover, in the absence of oclK or oclL, oclB can convert decaturin C into 15-deoxyoxalicine A. The sequence is that of FAD-dependent monooxygenase olcE from Penicillium canescens.